The following is a 388-amino-acid chain: Succinate--CoA ligase [ADP-forming] subunit beta (388 aa).

Positions 9–244 (KELFARRGLP…VTQEDAREAH (236 aa)) constitute an ATP-grasp domain. Residues lysine 46, 53 to 55 (GRG), glutamate 99, threonine 102, and glutamate 107 contribute to the ATP site. Positions 199 and 213 each coordinate Mg(2+). Substrate contacts are provided by residues asparagine 264 and 321 to 323 (GIV).

This sequence belongs to the succinate/malate CoA ligase beta subunit family. As to quaternary structure, heterotetramer of two alpha and two beta subunits. Mg(2+) is required as a cofactor.

It catalyses the reaction succinate + ATP + CoA = succinyl-CoA + ADP + phosphate. It carries out the reaction GTP + succinate + CoA = succinyl-CoA + GDP + phosphate. The protein operates within carbohydrate metabolism; tricarboxylic acid cycle; succinate from succinyl-CoA (ligase route): step 1/1. Functionally, succinyl-CoA synthetase functions in the citric acid cycle (TCA), coupling the hydrolysis of succinyl-CoA to the synthesis of either ATP or GTP and thus represents the only step of substrate-level phosphorylation in the TCA. The beta subunit provides nucleotide specificity of the enzyme and binds the substrate succinate, while the binding sites for coenzyme A and phosphate are found in the alpha subunit. The polypeptide is Succinate--CoA ligase [ADP-forming] subunit beta (Hamiltonella defensa subsp. Acyrthosiphon pisum (strain 5AT)).